Consider the following 138-residue polypeptide: Cofilin (138 aa).

In terms of domain architecture, ADF-H spans 2–136; it reads SSGVQPTQEC…TKDALFEKAT (135 aa).

Belongs to the actin-binding proteins ADF family.

It localises to the cytoplasm. The protein localises to the cytoskeleton. It is found in the nucleus matrix. In terms of biological role, controls reversibly actin polymerization and depolymerization in a pH-sensitive manner. It has the ability to bind G- and F-actin in a 1:1 ratio of cofilin to actin. Binding to F-actin is regulated by tropomyosin. It is the major component of intranuclear and cytoplasmic actin rods. Required for accumulation of actin at the cell division site via depolymerizing actin at the cell ends. In association with myosin II has a role in the assembly of the contractile ring via severing actin filaments. Involved in the maintenance of the contractile ring once formed. In association with profilin and capping protein, has a role in the mitotic reorganization of the actin cytoskeleton. This Cryptococcus neoformans var. neoformans serotype D (strain B-3501A) (Filobasidiella neoformans) protein is Cofilin (COF1).